Reading from the N-terminus, the 1063-residue chain is Unconventional myosin-Ic (1063 aa).

N-acetylmethionine is present on Met-1. Positions 47–731 constitute a Myosin motor domain; the sequence is GVQDFVLLEN…TLFATEDALE (685 aa). ATP contacts are provided by residues Asn-88, Tyr-96, 139–148, and 192–196; these read SGESGAGKTE and NDNSS. The residue at position 383 (Lys-383) is an N6-methyllysine. Ser-408 is subject to Phosphoserine. Lys-486 bears the N6-acetyllysine mark. Ser-536 is subject to Phosphoserine. Residues 608-630 are actin-binding; it reads LLELVEILKSKEPAYVRCIKPND. IQ domains follow at residues 734–757 and 758–786; these read RQSL…FLRV and KRSA…AAQT. A phosphoserine mark is found at Ser-864 and Ser-1041. The TH1 domain maps to 885 to 1059; sequence KDNYPQSVPR…NGHLAVVAPR (175 aa).

The protein belongs to the TRAFAC class myosin-kinesin ATPase superfamily. Myosin family. In terms of assembly, interacts (via its IQ motifs) with CABP1 and CIB1; the interaction with CABP1 and CIB1 is calcium-dependent. Interacts (via tail domain) with PLEKHB1 (via PH domain); the interaction is not affected by the presence or absence of calcium and CALM. Interacts with POLR1A. Interacts with POLR2A. Component of the B-WICH complex, at least composed of SMARCA5/SNF2H, BAZ1B/WSTF, SF3B1, DEK, MYO1C, ERCC6, MYBBP1A and DDX21. Interacts (via its IQ motifs) with CALM; this precludes interaction with YWHAB. Interacts with YWHAB; this precludes interaction with CALM. Interacts with RPS6. Interacts with actin. Interacts with LLPH. Interacts with GLUT4. Interacts (via its IQ motifs) with SH3BGRL3; the interaction is dependent on calcium and takes place at membrane ruffles. Isoform 2 contains a N-acetylmethionine at position 1. In terms of tissue distribution, widely expressed.

The protein localises to the cytoplasm. Its subcellular location is the nucleus. The protein resides in the cell cortex. It localises to the cell projection. It is found in the ruffle membrane. The protein localises to the cytoplasmic vesicle. Its subcellular location is the stereocilium membrane. The protein resides in the nucleolus. It localises to the nucleoplasm. Its function is as follows. Myosins are actin-based motor molecules with ATPase activity. Unconventional myosins serve in intracellular movements. Their highly divergent tails are presumed to bind to membranous compartments, which would be moved relative to actin filaments. Involved in glucose transporter recycling in response to insulin by regulating movement of intracellular GLUT4-containing vesicles to the plasma membrane. Component of the hair cell's (the sensory cells of the inner ear) adaptation-motor complex. Acts as a mediator of adaptation of mechanoelectrical transduction in stereocilia of vestibular hair cells. Binds phosphoinositides and links the actin cytoskeleton to cellular membranes. In terms of biological role, isoform 3 is involved in regulation of transcription. Associated with transcriptional active ribosomal genes. Appears to cooperate with the WICH chromatin-remodeling complex to facilitate transcription. Necessary for the formation of the first phosphodiester bond during transcription initiation. The sequence is that of Unconventional myosin-Ic (MYO1C) from Bos taurus (Bovine).